The following is a 538-amino-acid chain: Calcyphosin-2 (538 aa).

Residues Arg134 to Lys146 show a composition bias toward polar residues. Positions Arg134–Asp154 are disordered. EF-hand domains are found at residues Arg426 to Glu461, Val462 to Glu497, and Tyr498 to Ser533. Ca(2+) contacts are provided by Asp439, Asn443, Asp450, Asn477, Asn479, Lys481, Glu486, Asp511, Asn513, Ser515, Ser517, and Asn522.

As to expression, abundantly expressed in many tissues. Expressed in brain, colon, heart, kidney, liver, lung, liver, pancreas, placenta, skeletal muscle, testis and thymus. Highest expression in colon, testis, lung, placenta and brain.

This chain is Calcyphosin-2, found in Homo sapiens (Human).